The primary structure comprises 90 residues: Small ribosomal subunit protein bS16 (90 aa).

This sequence belongs to the bacterial ribosomal protein bS16 family.

The sequence is that of Small ribosomal subunit protein bS16 from Heliobacterium modesticaldum (strain ATCC 51547 / Ice1).